A 315-amino-acid polypeptide reads, in one-letter code: Methionyl-tRNA formyltransferase (315 aa).

113–116 (SLLP) serves as a coordination point for (6S)-5,6,7,8-tetrahydrofolate.

Belongs to the Fmt family.

The enzyme catalyses L-methionyl-tRNA(fMet) + (6R)-10-formyltetrahydrofolate = N-formyl-L-methionyl-tRNA(fMet) + (6S)-5,6,7,8-tetrahydrofolate + H(+). Functionally, attaches a formyl group to the free amino group of methionyl-tRNA(fMet). The formyl group appears to play a dual role in the initiator identity of N-formylmethionyl-tRNA by promoting its recognition by IF2 and preventing the misappropriation of this tRNA by the elongation apparatus. This is Methionyl-tRNA formyltransferase from Pectobacterium atrosepticum (strain SCRI 1043 / ATCC BAA-672) (Erwinia carotovora subsp. atroseptica).